Here is a 618-residue protein sequence, read N- to C-terminus: Protein fem-1 homolog C (618 aa).

ANK repeat units follow at residues 2-31 (DLKT…DREV), 40-70 (NGAT…PVEL), 82-111 (EGAP…SVNN), 115-144 (TNST…DLEV), 148-177 (HGHT…DVNR), 181-210 (KGNT…SMEK), and 213-243 (YGMT…GLAE). 2 TPR repeats span residues 245-279 (ISAL…RHSE) and 337-370 (SYYI…QQSN). 2 ANK repeats span residues 482-524 (NGFS…DVNS) and 528-557 (DDNS…HFDS).

The protein belongs to the fem-1 family. As to quaternary structure, component of a CRL2 E3 ubiquitin-protein ligase complex, also named ECS (Elongin BC-CUL2/5-SOCS-box protein) complex.

It participates in protein modification; protein ubiquitination. Substrate-recognition component of a Cul2-RING (CRL2) E3 ubiquitin-protein ligase complex of the DesCEND (destruction via C-end degrons) pathway, which recognizes a C-degron located at the extreme C terminus of target proteins, leading to their ubiquitination and degradation. The C-degron recognized by the DesCEND pathway is usually a motif of less than ten residues and can be present in full-length proteins, truncated proteins or proteolytically cleaved forms. The CRL2(FEM1C) complex specifically recognizes proteins with an arginine at the C-terminus: recognizes and binds proteins ending with -Lys/Arg-Xaa-Arg and -Lys/Arg-Xaa-Xaa-Arg C-degrons, leading to their ubiquitination and degradation. The chain is Protein fem-1 homolog C from Danio rerio (Zebrafish).